Here is a 444-residue protein sequence, read N- to C-terminus: 23S rRNA (uracil(1939)-C(5))-methyltransferase RlmD (444 aa).

Positions 5 to 67 (RNRFDRTPFQ…RHFDEAKTVE (63 aa)) constitute a TRAM domain. Cys80, Cys86, Cys89, and Cys168 together coordinate [4Fe-4S] cluster. S-adenosyl-L-methionine contacts are provided by Gln276, Phe305, Asn310, Glu326, Asp353, and Asp374. The Nucleophile role is filled by Cys400.

The protein belongs to the class I-like SAM-binding methyltransferase superfamily. RNA M5U methyltransferase family. RlmD subfamily.

The enzyme catalyses uridine(1939) in 23S rRNA + S-adenosyl-L-methionine = 5-methyluridine(1939) in 23S rRNA + S-adenosyl-L-homocysteine + H(+). Catalyzes the formation of 5-methyl-uridine at position 1939 (m5U1939) in 23S rRNA. The protein is 23S rRNA (uracil(1939)-C(5))-methyltransferase RlmD of Xanthomonas oryzae pv. oryzae (strain KACC10331 / KXO85).